The primary structure comprises 117 residues: uncharacterized protein (117 aa).

This is an uncharacterized protein from Rattus norvegicus (Rat).